The following is a 290-amino-acid chain: MLEPQENGLTDLPDYEHIEDETFPPFPPPASPGREDGEGAEPEEESGRGAPVPVPPKRTVKRNIPKLNAERLISERGLPALRHVFEKAKFKGKGHEAEDLKTLIRHMEHWAHRLFPKLQFEDFIDRVECLGNKKEVQTCLKRIRLDLPILHEDFVSNNDEVEENNGHDVTATELDHFLTNSYGSVEFASESSRSLTEEEQQRIERNKQLALERRQAKLLSNSQSLGNDLSVNTPSTQTSEAGSTGEEQKEEESNGFNKDLLDSPHNAGAASTVNEEEQLKVEETQLDQSF.

The interval 1–59 (MLEPQENGLTDLPDYEHIEDETFPPFPPPASPGREDGEGAEPEEESGRGAPVPVPPKRT) is disordered. The segment at 67-143 (LNAERLISER…KEVQTCLKRI (77 aa)) is interaction with TIMELESS. 2 positions are modified to phosphoserine: Ser-194 and Ser-222. The segment covering 221 to 242 (NSQSLGNDLSVNTPSTQTSEAG) has biased composition (polar residues). Residues 221 to 290 (NSQSLGNDLS…VEETQLDQSF (70 aa)) are disordered. Thr-233 and Thr-244 each carry phosphothreonine.

This sequence belongs to the CSM3 family. As to quaternary structure, interacts with TIMELESS (via N-terminus), which impairs TIMELESS self-association. Associates with the MCM2-7 complex. Interacts with RPA2, PRDX2.

The protein resides in the cytoplasm. Its subcellular location is the nucleus. Functionally, plays an important role in the control of DNA replication and the maintenance of replication fork stability. Important for cell survival after DNA damage or replication stress. May be specifically required for the ATR-CHEK1 pathway in the replication checkpoint induced by hydroxyurea or ultraviolet light. Forms a complex with TIMELESS and this complex regulates DNA replication processes under both normal and stress conditions, stabilizes replication forks and influences both CHEK1 phosphorylation and the intra-S phase checkpoint in response to genotoxic stress. This chain is TIMELESS-interacting protein (TIPIN), found in Bos taurus (Bovine).